The primary structure comprises 733 residues: N-alpha-acetyltransferase 35, NatC auxiliary subunit (733 aa).

Belongs to the MAK10 family. As to quaternary structure, component of the N-terminal acetyltransferase C (NatC) complex, which is composed of MAK3, MAK10 and MAK31.

It is found in the cytoplasm. Functionally, component of the NatC N-terminal acetyltransferase, which catalyzes acetylation of the N-terminus Met of L-A virus Gag protein. MAK10 has a role in the propagation of L-A and M viruses, perhaps in the viral assembly. It is apparently directly needed for optimum respiration. The polypeptide is N-alpha-acetyltransferase 35, NatC auxiliary subunit (MAK10) (Saccharomyces cerevisiae (strain ATCC 204508 / S288c) (Baker's yeast)).